Here is a 183-residue protein sequence, read N- to C-terminus: Translation initiation factor IF-3 (183 aa).

This sequence belongs to the IF-3 family. As to quaternary structure, monomer.

Its subcellular location is the cytoplasm. In terms of biological role, IF-3 binds to the 30S ribosomal subunit and shifts the equilibrium between 70S ribosomes and their 50S and 30S subunits in favor of the free subunits, thus enhancing the availability of 30S subunits on which protein synthesis initiation begins. This is Translation initiation factor IF-3 from Aliivibrio salmonicida (strain LFI1238) (Vibrio salmonicida (strain LFI1238)).